The following is a 2131-amino-acid chain: Protein Ycf2 (2131 aa).

1466–1473 (GSIGTGRS) serves as a coordination point for ATP.

This sequence belongs to the Ycf2 family.

It localises to the plastid. Its subcellular location is the chloroplast stroma. Functionally, probable ATPase of unknown function. Its presence in a non-photosynthetic plant (Epifagus virginiana) and experiments in tobacco indicate that it has an essential function which is probably not related to photosynthesis. This chain is Protein Ycf2, found in Helianthus annuus (Common sunflower).